A 127-amino-acid chain; its full sequence is Aspartate 1-decarboxylase (127 aa).

Ser25 serves as the catalytic Schiff-base intermediate with substrate; via pyruvic acid. Residue Ser25 is modified to Pyruvic acid (Ser). Thr57 serves as a coordination point for substrate. The active-site Proton donor is the Tyr58. 73 to 75 (GAA) contributes to the substrate binding site.

Belongs to the PanD family. In terms of assembly, heterooctamer of four alpha and four beta subunits. Requires pyruvate as cofactor. In terms of processing, is synthesized initially as an inactive proenzyme, which is activated by self-cleavage at a specific serine bond to produce a beta-subunit with a hydroxyl group at its C-terminus and an alpha-subunit with a pyruvoyl group at its N-terminus.

The protein resides in the cytoplasm. The catalysed reaction is L-aspartate + H(+) = beta-alanine + CO2. Its pathway is cofactor biosynthesis; (R)-pantothenate biosynthesis; beta-alanine from L-aspartate: step 1/1. In terms of biological role, catalyzes the pyruvoyl-dependent decarboxylation of aspartate to produce beta-alanine. The sequence is that of Aspartate 1-decarboxylase from Bacillus cereus (strain 03BB102).